Here is a 74-residue protein sequence, read N- to C-terminus: Small ribosomal subunit protein bS20c (74 aa).

This sequence belongs to the bacterial ribosomal protein bS20 family.

The protein resides in the plastid. It is found in the chloroplast. Its function is as follows. Binds directly to 16S ribosomal RNA. This is Small ribosomal subunit protein bS20c from Cyanidioschyzon merolae (strain NIES-3377 / 10D) (Unicellular red alga).